The following is a 470-amino-acid chain: Dihydrolipoyl dehydrogenase (470 aa).

Residues 39–47 (EKGNLGGVC), lysine 56, and alanine 119 contribute to the FAD site. A disulfide bridge links cysteine 47 with cysteine 52. NAD(+) is bound by residues 183–187 (GGGYI), glutamate 206, and 271–274 (TVGR). Positions 314 and 322 each coordinate FAD. Histidine 446 acts as the Proton acceptor in catalysis.

It belongs to the class-I pyridine nucleotide-disulfide oxidoreductase family. In terms of assembly, homodimer. Identified in a complex with PdhC. Requires FAD as cofactor.

It is found in the cytoplasm. The catalysed reaction is N(6)-[(R)-dihydrolipoyl]-L-lysyl-[protein] + NAD(+) = N(6)-[(R)-lipoyl]-L-lysyl-[protein] + NADH + H(+). Lipoamide dehydrogenase is a component of the alpha-ketoacid dehydrogenase complexes. In Geobacillus stearothermophilus (Bacillus stearothermophilus), this protein is Dihydrolipoyl dehydrogenase (pdhD).